Here is a 281-residue protein sequence, read N- to C-terminus: 2-dehydro-3-deoxyphosphooctonate aldolase (281 aa).

It belongs to the KdsA family.

It is found in the cytoplasm. The enzyme catalyses D-arabinose 5-phosphate + phosphoenolpyruvate + H2O = 3-deoxy-alpha-D-manno-2-octulosonate-8-phosphate + phosphate. Its pathway is carbohydrate biosynthesis; 3-deoxy-D-manno-octulosonate biosynthesis; 3-deoxy-D-manno-octulosonate from D-ribulose 5-phosphate: step 2/3. It participates in bacterial outer membrane biogenesis; lipopolysaccharide biosynthesis. The chain is 2-dehydro-3-deoxyphosphooctonate aldolase from Stutzerimonas stutzeri (strain A1501) (Pseudomonas stutzeri).